We begin with the raw amino-acid sequence, 295 residues long: UDP-N-acetylenolpyruvoylglucosamine reductase (295 aa).

An FAD-binding PCMH-type domain is found at 24–188; sequence KVGGDAEIFF…LKAVFKVNKG (165 aa). Residue arginine 168 is part of the active site. Serine 217 serves as the catalytic Proton donor. The active site involves glutamate 287.

It belongs to the MurB family. The cofactor is FAD.

It is found in the cytoplasm. It catalyses the reaction UDP-N-acetyl-alpha-D-muramate + NADP(+) = UDP-N-acetyl-3-O-(1-carboxyvinyl)-alpha-D-glucosamine + NADPH + H(+). It functions in the pathway cell wall biogenesis; peptidoglycan biosynthesis. In terms of biological role, cell wall formation. The protein is UDP-N-acetylenolpyruvoylglucosamine reductase of Rickettsia akari (strain Hartford).